The chain runs to 314 residues: Ribosomal RNA small subunit methyltransferase H (314 aa).

S-adenosyl-L-methionine contacts are provided by residues 31 to 33 (GGY), Asp49, Phe76, Asp118, and Gln125.

This sequence belongs to the methyltransferase superfamily. RsmH family.

The protein resides in the cytoplasm. It carries out the reaction cytidine(1402) in 16S rRNA + S-adenosyl-L-methionine = N(4)-methylcytidine(1402) in 16S rRNA + S-adenosyl-L-homocysteine + H(+). Its function is as follows. Specifically methylates the N4 position of cytidine in position 1402 (C1402) of 16S rRNA. The protein is Ribosomal RNA small subunit methyltransferase H of Wolbachia pipientis wMel.